Here is a 146-residue protein sequence, read N- to C-terminus: Large ribosomal subunit protein bL9 (146 aa).

It belongs to the bacterial ribosomal protein bL9 family.

Functionally, binds to the 23S rRNA. In Deinococcus geothermalis (strain DSM 11300 / CIP 105573 / AG-3a), this protein is Large ribosomal subunit protein bL9.